Reading from the N-terminus, the 331-residue chain is UPF0194 membrane protein YbhG (331 aa).

The first 19 residues, 1–19 (MKKPVVIGLVIAAIVAVIA), serve as a signal peptide directing secretion. The stretch at 140-209 (RTISANDLEN…DLQDTTLIAP (70 aa)) forms a coiled coil.

It belongs to the UPF0194 family.

It localises to the periplasm. In Salmonella typhi, this protein is UPF0194 membrane protein YbhG (ybhG).